A 270-amino-acid chain; its full sequence is Formamidopyrimidine-DNA glycosylase (270 aa).

Catalysis depends on Pro2, which acts as the Schiff-base intermediate with DNA. The Proton donor role is filled by Glu3. Lys58 functions as the Proton donor; for beta-elimination activity in the catalytic mechanism. Positions 91, 110, and 151 each coordinate DNA. The FPG-type zinc-finger motif lies at 236–270 (FVYGRGGQPCKVCGTALREVKLGQRASVYCPRCQR). Arg260 functions as the Proton donor; for delta-elimination activity in the catalytic mechanism.

This sequence belongs to the FPG family. Monomer. Zn(2+) serves as cofactor.

The catalysed reaction is Hydrolysis of DNA containing ring-opened 7-methylguanine residues, releasing 2,6-diamino-4-hydroxy-5-(N-methyl)formamidopyrimidine.. The enzyme catalyses 2'-deoxyribonucleotide-(2'-deoxyribose 5'-phosphate)-2'-deoxyribonucleotide-DNA = a 3'-end 2'-deoxyribonucleotide-(2,3-dehydro-2,3-deoxyribose 5'-phosphate)-DNA + a 5'-end 5'-phospho-2'-deoxyribonucleoside-DNA + H(+). Its function is as follows. Involved in base excision repair of DNA damaged by oxidation or by mutagenic agents. Acts as a DNA glycosylase that recognizes and removes damaged bases. Has a preference for oxidized purines, such as 7,8-dihydro-8-oxoguanine (8-oxoG). Has AP (apurinic/apyrimidinic) lyase activity and introduces nicks in the DNA strand. Cleaves the DNA backbone by beta-delta elimination to generate a single-strand break at the site of the removed base with both 3'- and 5'-phosphates. This is Formamidopyrimidine-DNA glycosylase from Pseudomonas putida (strain GB-1).